A 437-amino-acid chain; its full sequence is Na(+)/H(+) antiporter NhaA (437 aa).

A run of 11 helical transmembrane segments spans residues 29–49, 74–94, 111–131, 139–159, 168–188, 196–216, 229–249, 307–327, 341–361, 376–396, and 411–431; these read TAGI…NTAW, LKHW…ALEL, LPVA…LLLV, GWGT…ALLG, LFLL…VAVG, VALG…LLGI, IWLA…ILGL, IALH…SNAG, IAIV…FSFL, WSLL…ALFI, and LGVL…LTLL.

The protein belongs to the NhaA Na(+)/H(+) (TC 2.A.33) antiporter family.

The protein localises to the cell inner membrane. It carries out the reaction Na(+)(in) + 2 H(+)(out) = Na(+)(out) + 2 H(+)(in). Na(+)/H(+) antiporter that extrudes sodium in exchange for external protons. This Rhizobium meliloti (strain 1021) (Ensifer meliloti) protein is Na(+)/H(+) antiporter NhaA.